We begin with the raw amino-acid sequence, 560 residues long: Ubiquitin carboxyl-terminal hydrolase MINDY-3 homolog (560 aa).

Over residues 1–13 (MNEKIVREQRGGE) the composition is skewed to basic and acidic residues. Disordered regions lie at residues 1-30 (MNEK…AASA) and 44-91 (SHKT…MLNA). Low complexity-rich tracts occupy residues 15–30 (SPSS…AASA) and 52–81 (TASS…SSSS). Residue Cys-139 is the Nucleophile of the active site. The disordered stretch occupies residues 203-237 (TEAGSTKKRSPAGEEESALAGQAAGSSEEVEEAAE). A phosphoserine mark is found at Ser-212 and Ser-219. Residue His-403 is the Proton acceptor of the active site.

Belongs to the MINDY deubiquitinase family. FAM188 subfamily.

It catalyses the reaction Thiol-dependent hydrolysis of ester, thioester, amide, peptide and isopeptide bonds formed by the C-terminal Gly of ubiquitin (a 76-residue protein attached to proteins as an intracellular targeting signal).. Its function is as follows. Hydrolase that can remove 'Lys-48'-linked conjugated ubiquitin from proteins. The protein is Ubiquitin carboxyl-terminal hydrolase MINDY-3 homolog (mindy3) of Drosophila melanogaster (Fruit fly).